A 414-amino-acid chain; its full sequence is 2-epi-5-epi-valiolone synthase (414 aa).

NAD(+)-binding positions include aspartate 70, 101–104 (ESAK), 134–138 (GVLTD), 158–159 (TT), lysine 171, lysine 180, and 198–201 (FLAT). Lysine 171 is a catalytic residue. The Zn(2+) site is built by glutamate 213, histidine 284, and histidine 300.

The protein belongs to the sugar phosphate cyclases superfamily. EEVS family. Requires NAD(+) as cofactor. Zn(2+) is required as a cofactor.

It catalyses the reaction D-sedoheptulose 7-phosphate = 2-epi-5-epi-valiolone + phosphate. Its pathway is antibiotic biosynthesis. Its function is as follows. Catalyzes the cyclization of D-sedoheptulose 7-phosphate to 2-epi-5-epi-valiolone. Involved in validamycin biosynthesis. This is 2-epi-5-epi-valiolone synthase from Streptomyces hygroscopicus subsp. jinggangensis (strain 5008).